A 433-amino-acid chain; its full sequence is Glutamate-1-semialdehyde 2,1-aminomutase (433 aa).

Position 267 is an N6-(pyridoxal phosphate)lysine (K267).

The protein belongs to the class-III pyridoxal-phosphate-dependent aminotransferase family. HemL subfamily. In terms of assembly, homodimer. It depends on pyridoxal 5'-phosphate as a cofactor.

The protein resides in the cytoplasm. It carries out the reaction (S)-4-amino-5-oxopentanoate = 5-aminolevulinate. The protein operates within porphyrin-containing compound metabolism; protoporphyrin-IX biosynthesis; 5-aminolevulinate from L-glutamyl-tRNA(Glu): step 2/2. This Syntrophobacter fumaroxidans (strain DSM 10017 / MPOB) protein is Glutamate-1-semialdehyde 2,1-aminomutase.